Reading from the N-terminus, the 415-residue chain is Histidine--tRNA ligase (415 aa).

The protein belongs to the class-II aminoacyl-tRNA synthetase family. Homodimer.

It is found in the cytoplasm. The catalysed reaction is tRNA(His) + L-histidine + ATP = L-histidyl-tRNA(His) + AMP + diphosphate + H(+). The sequence is that of Histidine--tRNA ligase from Clostridium perfringens (strain SM101 / Type A).